Reading from the N-terminus, the 141-residue chain is Large ribosomal subunit protein uL11 (141 aa).

Belongs to the universal ribosomal protein uL11 family. As to quaternary structure, part of the ribosomal stalk of the 50S ribosomal subunit. Interacts with L10 and the large rRNA to form the base of the stalk. L10 forms an elongated spine to which L12 dimers bind in a sequential fashion forming a multimeric L10(L12)X complex. One or more lysine residues are methylated.

Functionally, forms part of the ribosomal stalk which helps the ribosome interact with GTP-bound translation factors. The chain is Large ribosomal subunit protein uL11 from Prochlorococcus marinus (strain MIT 9215).